The primary structure comprises 141 residues: Large ribosomal subunit protein bL17 (141 aa).

Belongs to the bacterial ribosomal protein bL17 family. As to quaternary structure, part of the 50S ribosomal subunit. Contacts protein L32.

In Maridesulfovibrio salexigens (strain ATCC 14822 / DSM 2638 / NCIMB 8403 / VKM B-1763) (Desulfovibrio salexigens), this protein is Large ribosomal subunit protein bL17.